The sequence spans 608 residues: Mitogen-activated protein kinase kinase kinase 1 (608 aa).

Residues 1-13 (MDRILARMKKSTG) are compositionally biased toward basic residues. Residues 1–20 (MDRILARMKKSTGRRGGDKN) are disordered. Residues 1–325 (MDRILARMKK…VSNTSPIYPD (325 aa)) are regulatory region. The residue at position 62 (serine 62) is a Phosphoserine. The segment at 192–234 (MERTPTIVKSKGYLVPNNVVAVGVGVGGGIKGLRPPVLKPPPA) is binding with MPK4. Disordered regions lie at residues 228 to 247 (VLKPPPAMKRPPIDHRGSSW) and 256 to 287 (SETVKRPSSSSSSSEDGCDEEEGKEEEAEAEE). The span at 271–287 (DGCDEEEGKEEEAEAEE) shows a compositional bias: acidic residues. Positions 333-587 (WQKGQLLGRG…AAELLNHPFV (255 aa)) constitute a Protein kinase domain. Residues 339-347 (LGRGSFGSV) and lysine 361 contribute to the ATP site. Aspartate 456 (proton acceptor) is an active-site residue. Position 603 is a phosphoserine (serine 603).

The protein belongs to the protein kinase superfamily. STE Ser/Thr protein kinase family. MAP kinase kinase kinase subfamily. As to quaternary structure, interacts with MKK1, MMK2 and MPK4. May form a ternary complex composed of MEKK1 and MKK1/MKK2 and MPK4. Interacts with RACK1A, RACK1B and RACK1C. Binds to CRLK1. In terms of processing, phosphorylated by CRLK1 in response to cold.

It is found in the cell membrane. The protein resides in the endosome. It catalyses the reaction L-seryl-[protein] + ATP = O-phospho-L-seryl-[protein] + ADP + H(+). The catalysed reaction is L-threonyl-[protein] + ATP = O-phospho-L-threonyl-[protein] + ADP + H(+). Its activity is regulated as follows. Activated by cold via CRLK1-mediated phosphorylation and leading to elevated kinase activity towards MKK2. In terms of biological role, the MEKK1, MKK1/MKK2 and MPK4 function in a signaling pathway that modulates the expression of genes responding to biotic and abiotic stresses and also plays an important role in pathogen defense by negatively regulating innate immunity. Involved in the innate immune MAP kinase signaling cascade (MEKK1, MKK4/MKK5 and MPK3/MPK6) downstream of bacterial flagellin receptor FLS2. May be involved in the cold and salinity stress-mediated MAP kinase signaling cascade (MEKK1, MKK1/MKK2 and MPK4/MPK6). Activates by phosphorylation the downstream MKK2, MKK4 and MKK5 in a calcium-dependent manner. The sequence is that of Mitogen-activated protein kinase kinase kinase 1 (MEKK1) from Arabidopsis thaliana (Mouse-ear cress).